Here is an 852-residue protein sequence, read N- to C-terminus: Beta-galactosidase 8 (852 aa).

An N-terminal signal peptide occupies residues 1 to 29; it reads MEIAAKMVKVRKMEMILLLILVIVVAATA. A glycan (N-linked (GlcNAc...) asparagine) is linked at Asn-31. Glu-188 acts as the Proton donor in catalysis. Glu-257 serves as the catalytic Nucleophile. Residues Asn-258, Asn-475, Asn-766, and Asn-807 are each glycosylated (N-linked (GlcNAc...) asparagine). Residues 766-852 enclose the SUEL-type lectin domain; it reads NRTRPVLSLK…KSLAVEASCS (87 aa).

Belongs to the glycosyl hydrolase 35 family. As to expression, expressed in roots, flowers and siliques.

Its subcellular location is the secreted. It localises to the extracellular space. The protein resides in the apoplast. It catalyses the reaction Hydrolysis of terminal non-reducing beta-D-galactose residues in beta-D-galactosides.. This Arabidopsis thaliana (Mouse-ear cress) protein is Beta-galactosidase 8 (BGAL8).